Here is a 67-residue protein sequence, read N- to C-terminus: uncharacterized protein (67 aa).

This is an uncharacterized protein from Lymantria dispar multicapsid nuclear polyhedrosis virus (LdMNPV).